The chain runs to 102 residues: Small ribosomal subunit protein uS10 (102 aa).

The protein belongs to the universal ribosomal protein uS10 family. Part of the 30S ribosomal subunit.

In terms of biological role, involved in the binding of tRNA to the ribosomes. This is Small ribosomal subunit protein uS10 from Methanobrevibacter smithii (strain ATCC 35061 / DSM 861 / OCM 144 / PS).